Consider the following 183-residue polypeptide: Auxin-responsive protein IAA20 (183 aa).

Disordered stretches follow at residues 1 to 23 and 42 to 77; these read MELE…TATA and GFEE…NKRR. The EAR-like (transcriptional repression) motif lies at 3-7; it reads LELGL. The PB1 domain occupies 98 to 183; it reads GGYVKVKMEG…KSVKRLKILV (86 aa).

It belongs to the Aux/IAA family. As to quaternary structure, homodimers and heterodimers. As to expression, expressed at very low levels in etiolated seedlings and flowers.

Its subcellular location is the nucleus. In terms of biological role, aux/IAA proteins are short-lived transcriptional factors that function as repressors of early auxin response genes at low auxin concentrations. This chain is Auxin-responsive protein IAA20 (IAA20), found in Oryza sativa subsp. japonica (Rice).